We begin with the raw amino-acid sequence, 611 residues long: tRNA uridine 5-carboxymethylaminomethyl modification enzyme MnmG (611 aa).

14-19 is an FAD binding site; that stretch reads GAGHAG. 274 to 288 contributes to the NAD(+) binding site; it reads GPRYCPSIEDKIVKF.

It belongs to the MnmG family. In terms of assembly, homodimer. Heterotetramer of two MnmE and two MnmG subunits. Requires FAD as cofactor.

Its subcellular location is the cytoplasm. Functionally, NAD-binding protein involved in the addition of a carboxymethylaminomethyl (cmnm) group at the wobble position (U34) of certain tRNAs, forming tRNA-cmnm(5)s(2)U34. The sequence is that of tRNA uridine 5-carboxymethylaminomethyl modification enzyme MnmG from Chlamydia abortus (strain DSM 27085 / S26/3) (Chlamydophila abortus).